A 199-amino-acid chain; its full sequence is Transgelin-2 (199 aa).

Position 2 is an N-acetylalanine (Ala2). Position 11 is a phosphoserine (Ser11). Lys17 and Lys20 each carry N6-acetyllysine. The Calponin-homology (CH) domain maps to 24 to 136 (ADLEQILIQW…RTLMNLGGLA (113 aa)). At Ser163 the chain carries Phosphoserine. Lys171 is covalently cross-linked (Glycyl lysine isopeptide (Lys-Gly) (interchain with G-Cter in SUMO2)). One copy of the Calponin-like repeat lies at 174 to 199 (IGLQMGTNRGASQAGMTGYGMPRQIL). Thr180 bears the Phosphothreonine mark. Omega-N-methylarginine is present on residues Arg182 and Arg196.

It belongs to the calponin family.

This chain is Transgelin-2 (TAGLN2), found in Bos taurus (Bovine).